The chain runs to 248 residues: Probable pyridoxal 5'-phosphate synthase subunit pdx2 (248 aa).

Residue 70–72 (GES) coordinates L-glutamine. The Nucleophile role is filled by Cys106. Residues Arg136 and 174 to 175 (IR) contribute to the L-glutamine site. Catalysis depends on charge relay system residues His221 and Glu223.

The protein belongs to the glutaminase PdxT/SNO family.

The catalysed reaction is aldehydo-D-ribose 5-phosphate + D-glyceraldehyde 3-phosphate + L-glutamine = pyridoxal 5'-phosphate + L-glutamate + phosphate + 3 H2O + H(+). It catalyses the reaction L-glutamine + H2O = L-glutamate + NH4(+). It participates in cofactor biosynthesis; pyridoxal 5'-phosphate biosynthesis. In terms of biological role, catalyzes the hydrolysis of glutamine to glutamate and ammonia as part of the biosynthesis of pyridoxal 5'-phosphate. The resulting ammonia molecule is channeled to the active site of pdx1. The polypeptide is Probable pyridoxal 5'-phosphate synthase subunit pdx2 (Dictyostelium discoideum (Social amoeba)).